We begin with the raw amino-acid sequence, 358 residues long: Alanine racemase (358 aa).

Lys-35 functions as the Proton acceptor; specific for D-alanine in the catalytic mechanism. Lys-35 carries the post-translational modification N6-(pyridoxal phosphate)lysine. Arg-130 serves as a coordination point for substrate. Tyr-255 serves as the catalytic Proton acceptor; specific for L-alanine. Met-303 is a substrate binding site.

This sequence belongs to the alanine racemase family. The cofactor is pyridoxal 5'-phosphate.

The catalysed reaction is L-alanine = D-alanine. Its pathway is amino-acid biosynthesis; D-alanine biosynthesis; D-alanine from L-alanine: step 1/1. Catalyzes the interconversion of L-alanine and D-alanine. May also act on other amino acids. In Shewanella sp. (strain MR-4), this protein is Alanine racemase (alr).